Consider the following 231-residue polypeptide: MDFEIYLFDIEGTTTPIEFVHKILFPYSVGKFETFFRSNSLERKWIEKLLEEGKRDSTYSRQLTDSPQNLSDYCKYLVSVDRKSGPLKEIQGRIWKHGYENGELKSSLFADVPSFLKRIQSAKKKSAVYSSGSIEAQKLIFKYSDFGDLTEYFSAYFDTGVGGKRESASYSRIAEQLGIAPEKILFFTDIKEEADAARNAEFKTTLLERPGNAPQPKHSHPKISSFENFNP.

The segment at 206-231 (LLERPGNAPQPKHSHPKISSFENFNP) is disordered.

Belongs to the HAD-like hydrolase superfamily. MasA/MtnC family. In terms of assembly, monomer. The cofactor is Mg(2+).

It catalyses the reaction 5-methylsulfanyl-2,3-dioxopentyl phosphate + H2O = 1,2-dihydroxy-5-(methylsulfanyl)pent-1-en-3-one + phosphate. It functions in the pathway amino-acid biosynthesis; L-methionine biosynthesis via salvage pathway; L-methionine from S-methyl-5-thio-alpha-D-ribose 1-phosphate: step 3/6. Its pathway is amino-acid biosynthesis; L-methionine biosynthesis via salvage pathway; L-methionine from S-methyl-5-thio-alpha-D-ribose 1-phosphate: step 4/6. Bifunctional enzyme that catalyzes the enolization of 2,3-diketo-5-methylthiopentyl-1-phosphate (DK-MTP-1-P) into the intermediate 2-hydroxy-3-keto-5-methylthiopentenyl-1-phosphate (HK-MTPenyl-1-P), which is then dephosphorylated to form the acireductone 1,2-dihydroxy-3-keto-5-methylthiopentene (DHK-MTPene). In Leptospira borgpetersenii serovar Hardjo-bovis (strain JB197), this protein is Enolase-phosphatase E1.